Consider the following 250-residue polypeptide: MTNDSARMRKVLTFTRRSNRMTACQKRDYQHLASRWIIPYQNTVFDYAAVFCSPAAPSAPAGAFPAPQGKTDAVAPACAPAPLVVEIGFGMGSATAAIAARNPHLSYLGIEVYRAGIGRLLRKIEAERLHNLRIIEHDALDVLRTMIAPQTLAGLHIFFPDPWPKTRHHKRRLLYRPRTDLLARALAPGGYLYAVTDWAEYARRAQEELARTPSLTWAPQGARPWRPATEFERKAQTQGRAIHELFFIKA.

Positions 86, 111, 138, and 161 each coordinate S-adenosyl-L-methionine. D161 is an active-site residue. Residues K165, D197, and 229–232 (TEFE) contribute to the substrate site.

This sequence belongs to the class I-like SAM-binding methyltransferase superfamily. TrmB family.

The catalysed reaction is guanosine(46) in tRNA + S-adenosyl-L-methionine = N(7)-methylguanosine(46) in tRNA + S-adenosyl-L-homocysteine. Its pathway is tRNA modification; N(7)-methylguanine-tRNA biosynthesis. In terms of biological role, catalyzes the formation of N(7)-methylguanine at position 46 (m7G46) in tRNA. This Treponema pallidum (strain Nichols) protein is tRNA (guanine-N(7)-)-methyltransferase.